The chain runs to 88 residues: UPF0297 protein SSA_2241 (88 aa).

Belongs to the UPF0297 family.

The protein is UPF0297 protein SSA_2241 of Streptococcus sanguinis (strain SK36).